The primary structure comprises 387 residues: Cytochrome b (387 aa).

8 helical membrane-spanning segments follow: residues 32-52, 76-98, 113-133, 179-199, 225-245, 290-310, 325-345, and 353-373; these read FGFF…LLAM, WLLR…VHML, LWVS…LGYV, FFSL…LHII, FTIK…AFVF, LGVL…FLTI, LFWS…QPAA, and LYST…IYMV. His82 and His96 together coordinate heme b. 2 residues coordinate heme b: His183 and His197.

Belongs to the cytochrome b family. As to quaternary structure, the main subunits of complex b-c1 are: cytochrome b, cytochrome c1 and the Rieske protein. It depends on heme b as a cofactor.

The protein localises to the mitochondrion inner membrane. Its function is as follows. Component of the ubiquinol-cytochrome c reductase complex (complex III or cytochrome b-c1 complex) that is part of the mitochondrial respiratory chain. The b-c1 complex mediates electron transfer from ubiquinol to cytochrome c. Contributes to the generation of a proton gradient across the mitochondrial membrane that is then used for ATP synthesis. This is Cytochrome b (cytB) from Dictyostelium citrinum (Slime mold).